Reading from the N-terminus, the 418-residue chain is Gamma-glutamyl phosphate reductase (418 aa).

It belongs to the gamma-glutamyl phosphate reductase family.

Its subcellular location is the cytoplasm. The enzyme catalyses L-glutamate 5-semialdehyde + phosphate + NADP(+) = L-glutamyl 5-phosphate + NADPH + H(+). It participates in amino-acid biosynthesis; L-proline biosynthesis; L-glutamate 5-semialdehyde from L-glutamate: step 2/2. Catalyzes the NADPH-dependent reduction of L-glutamate 5-phosphate into L-glutamate 5-semialdehyde and phosphate. The product spontaneously undergoes cyclization to form 1-pyrroline-5-carboxylate. This Desulforapulum autotrophicum (strain ATCC 43914 / DSM 3382 / VKM B-1955 / HRM2) (Desulfobacterium autotrophicum) protein is Gamma-glutamyl phosphate reductase.